Consider the following 339-residue polypeptide: 5-dehydro-2-deoxygluconokinase (339 aa).

The protein belongs to the carbohydrate kinase PfkB family.

It carries out the reaction 5-dehydro-2-deoxy-D-gluconate + ATP = 6-phospho-5-dehydro-2-deoxy-D-gluconate + ADP + H(+). It functions in the pathway polyol metabolism; myo-inositol degradation into acetyl-CoA; acetyl-CoA from myo-inositol: step 5/7. Its function is as follows. Catalyzes the phosphorylation of 5-dehydro-2-deoxy-D-gluconate (2-deoxy-5-keto-D-gluconate or DKG) to 6-phospho-5-dehydro-2-deoxy-D-gluconate (DKGP). This Clostridium botulinum (strain Alaska E43 / Type E3) protein is 5-dehydro-2-deoxygluconokinase.